The chain runs to 1259 residues: Translocation and assembly module subunit TamB (1259 aa).

Met1 bears the N-formylmethionine mark. The Cytoplasmic segment spans residues 1-6; it reads MSLWKK. A helical; Signal-anchor for type II membrane protein transmembrane segment spans residues 7 to 27; the sequence is ISLGVVIVILLLLGSVAFLVG. Residues 28–1259 lie on the Periplasmic side of the membrane; sequence TTSGLHLVFK…ALDLLYQFEF (1232 aa).

The protein belongs to the TamB family. Interacts with TamA to form the translocation and assembly module (TAM).

It is found in the cell inner membrane. In terms of biological role, component of the translocation and assembly module (TAM), which facilitates the insertion and assembly of specific beta-barrel proteins into the outer membrane. Promotes the assembly and secretion across the outer membrane of a subset of autotransporters, such as Ag43. Involved in the assembly of the outer membrane usher protein FimD. In vitro, when TAM is reconstituted into preformed liposomes, it can promote the assembly of several outer membrane proteins, including OmpA, EspP, Ag43 and FadL. TamA is sufficient to catalyze a low level of outer membrane protein (OMP) assembly, but both TamA and TamB are required for efficient OMP assembly. TamB may regulate TamA activity. It could regulate conformational changes in TamA to drive its function in OMP assembly. It could also act as a chaperone that facilitate the transport of nascent membrane proteins across the periplasm to TamA in the outer membrane. Its function is as follows. In addition, is involved in outer membrane lipid homeostasis. Likely transports phospholipids between the inner membrane and the outer membrane. It would provide a bridge-like structure that protects phospholipids as they travel across the periplasm. One possible explanation for the apparent dual function of TAM is that TamB is a somewhat generic transporter of hydrophobic molecules. Functionally, tamB, YdbH and YhdP are redundant, but not equivalent, in performing an essential function for growth and maintaining lipid homeostasis in the outer membrane. The transport functions of TamB and YhdP could be differentiated according to the fatty acid saturation state of the phospholipids, with TamB transporting more unsaturated phospholipids and YhdP more saturated phospholipids. Any of these three proteins is sufficient for growth. The chain is Translocation and assembly module subunit TamB from Escherichia coli (strain K12).